The chain runs to 185 residues: Large ribosomal subunit protein uL5 (185 aa).

It belongs to the universal ribosomal protein uL5 family. In terms of assembly, part of the 50S ribosomal subunit; part of the 5S rRNA/L5/L18/L25 subcomplex. Contacts the 5S rRNA and the P site tRNA. Forms a bridge to the 30S subunit in the 70S ribosome.

This is one of the proteins that bind and probably mediate the attachment of the 5S RNA into the large ribosomal subunit, where it forms part of the central protuberance. In the 70S ribosome it contacts protein S13 of the 30S subunit (bridge B1b), connecting the 2 subunits; this bridge is implicated in subunit movement. Contacts the P site tRNA; the 5S rRNA and some of its associated proteins might help stabilize positioning of ribosome-bound tRNAs. The polypeptide is Large ribosomal subunit protein uL5 (Bartonella quintana (strain Toulouse) (Rochalimaea quintana)).